We begin with the raw amino-acid sequence, 74 residues long: Conotoxin TsMLCL-04 (74 aa).

The N-terminal stretch at 1-19 (MLCLPVFIILLLLASPAAP) is a signal peptide. The propeptide occupies 20–60 (NPLETRIQRDLIRAALEDADMKTNERFLEGVISTIKDFAGK).

This sequence belongs to the conotoxin T superfamily. In terms of processing, contains 2 disulfide bonds that can be either 'C1-C3, C2-C4' or 'C1-C4, C2-C3', since these disulfide connectivities have been observed for conotoxins with cysteine framework V (for examples, see AC P0DQQ7 and AC P81755). Expressed by the venom duct.

The protein localises to the secreted. The chain is Conotoxin TsMLCL-04 from Conus tessulatus (Tessellate cone).